A 257-amino-acid polypeptide reads, in one-letter code: Phosphonates import ATP-binding protein PhnC (257 aa).

Residues 2-246 enclose the ABC transporter domain; it reads IEFRNVSKVY…KFAEIYGDVA (245 aa). Position 35–42 (35–42) interacts with ATP; sequence GLSGAGKS.

It belongs to the ABC transporter superfamily. Phosphonates importer (TC 3.A.1.9.1) family. As to quaternary structure, the complex is composed of two ATP-binding proteins (PhnC), two transmembrane proteins (PhnE) and a solute-binding protein (PhnD).

The protein resides in the cell membrane. It catalyses the reaction phosphonate(out) + ATP + H2O = phosphonate(in) + ADP + phosphate + H(+). In terms of biological role, part of the ABC transporter complex PhnCDE involved in phosphonates import. Responsible for energy coupling to the transport system. The sequence is that of Phosphonates import ATP-binding protein PhnC from Bacillus cereus (strain ZK / E33L).